We begin with the raw amino-acid sequence, 489 residues long: UDP-N-acetylmuramoyl-L-alanyl-D-glutamate--2,6-diaminopimelate ligase (489 aa).

A UDP-N-acetyl-alpha-D-muramoyl-L-alanyl-D-glutamate-binding site is contributed by S34. 110 to 116 (GTAGKTS) contributes to the ATP binding site. UDP-N-acetyl-alpha-D-muramoyl-L-alanyl-D-glutamate-binding positions include 152-153 (TT), S179, Q185, and R187. Position 219 is an N6-carboxylysine (K219). Residues R383, 407–410 (DNPR), G455, and E459 contribute to the meso-2,6-diaminopimelate site. A Meso-diaminopimelate recognition motif motif is present at residues 407 to 410 (DNPR).

It belongs to the MurCDEF family. MurE subfamily. Mg(2+) is required as a cofactor. Carboxylation is probably crucial for Mg(2+) binding and, consequently, for the gamma-phosphate positioning of ATP.

The protein localises to the cytoplasm. The catalysed reaction is UDP-N-acetyl-alpha-D-muramoyl-L-alanyl-D-glutamate + meso-2,6-diaminopimelate + ATP = UDP-N-acetyl-alpha-D-muramoyl-L-alanyl-gamma-D-glutamyl-meso-2,6-diaminopimelate + ADP + phosphate + H(+). It participates in cell wall biogenesis; peptidoglycan biosynthesis. Functionally, catalyzes the addition of meso-diaminopimelic acid to the nucleotide precursor UDP-N-acetylmuramoyl-L-alanyl-D-glutamate (UMAG) in the biosynthesis of bacterial cell-wall peptidoglycan. This is UDP-N-acetylmuramoyl-L-alanyl-D-glutamate--2,6-diaminopimelate ligase from Agrobacterium fabrum (strain C58 / ATCC 33970) (Agrobacterium tumefaciens (strain C58)).